The primary structure comprises 119 residues: Large ribosomal subunit protein eL31z (119 aa).

It belongs to the eukaryotic ribosomal protein eL31 family.

The sequence is that of Large ribosomal subunit protein eL31z (RPL31A) from Arabidopsis thaliana (Mouse-ear cress).